The chain runs to 195 residues: Imidazoleglycerol-phosphate dehydratase (195 aa).

Belongs to the imidazoleglycerol-phosphate dehydratase family.

It localises to the cytoplasm. The catalysed reaction is D-erythro-1-(imidazol-4-yl)glycerol 3-phosphate = 3-(imidazol-4-yl)-2-oxopropyl phosphate + H2O. It participates in amino-acid biosynthesis; L-histidine biosynthesis; L-histidine from 5-phospho-alpha-D-ribose 1-diphosphate: step 6/9. The sequence is that of Imidazoleglycerol-phosphate dehydratase from Bacillus cytotoxicus (strain DSM 22905 / CIP 110041 / 391-98 / NVH 391-98).